The sequence spans 1570 residues: MSSLLERLHSKYSQNRPWPETIKLVRQIMEKRTGMMSGSHQHLVTCLETLQKALKVSSLSAMTDRLESIARQNGLTSHLSPNGTECYITTDMFYLEVLLDTEGQLCDVKVAHHRENPVSCPELVEQLREKNFEDFSQHLKGLVNLYKVPGDNKLETKMYLALQSLELDLTKMAAIYWQATNATVLEKILHGTVGYLTPRSGGQVMSLKYYVSPYDLFDDGTGASISLSEGHAVPRSLGMNVSVTIEATTSMYKLPIAPLIVGSHAMDNKGTPSFTSITNANSVDLPACFFLKFPQPIPVSRAFIQKIEHCTGIPLIDGSHTFLPHYELVTQFELAKEKDPGPLNHNMRFYASLPGQQHCYFLNKDAPLPDGRSLQGTLLSKIPFQHPSRVPVILSLIRHQVAYNTLIGSCVKRTMLKEDCPGLLQFEVAPLSDSCFSISFQHPVNDSLVCVVMDVQDSTHVSCKLYKGLSDALICTDDFITKVVQRCMSIPVTMRAIRRKAETIQADTPALSLIAETVEDMVKKNLPPASSPGYGMTSALSGLTTPTSSYTSGQNSSLFNMGMKERHDSTGHGDDFNKVTQNPILTSLLQITNNTGGTLGSSPTQPQHTPPPVSSPASNTKNHPMLMNLLKDNPAQDFSNLYGGSPMERQNSSGSPRTELGASATGKPKKKRPRTGAEKMKNQTEDDFQRELFSMDVDSQNTIFDVGMAGDALDTPHITPAPSQCGTPPTVYQQSIPHAQSNMQRMVRIPSTDAIIPDVTDILSDIAEEASKLSGPGEDCPNLGTPVRDSSSSGHSQSTLFDTDVFQVDGGGGSGGENPYPDPVDLIVDSHGSPNSDSPNTFFNSVDFNPDLLNSQSQSGFTDDLNDDSSQSGDNDFKDFAGPGLASLNIVSGLPVDGGDGKYKMGLGADTLDFSIISTGGSKTLGGPDIQETQSRSQSPLLSNDLGKDRPQKQKVKESSNGGGAGGGLSGMQSAGMEGKSMKRSRTPSSDGKSKDKPPKRKKTESDGKSPSHITNRPFTPPTSTGGSKSPGTSGRSQTPPGMATPPIPKITIQIPKGTVSVGKPSSHGQYSSSGSSSSSSSKSHHGHSSLSSSASGKIKSNKSDGSSGMKIGSSGGGMYSGQSGQSSSQSKNSSQSMGKAGSSPITKHGLSSNVSNSSGSKTKPQGKPSVLMNPSLSKPNISPSHSRPSGGSDKMSSPMKPMPGTPPSSKAKSPIGSGGQHLSGGGSNSTTKSSSGLVSSGSLSQKPNSSSSSSSSSSSSSSSSSSSSSSFCGGVSQNLHGNSKGKSPSRNKKPSLTAVIDKLKHGVGTGGPGSEDPMDGGGGGGSTGAPSHGMSSKHGMVVGEFPTKREKSEKDKSKGSGSGGSSDPSKKGGGDSKGSVGTGVAKIIISKHDGGSPSIKAKVTLQKPEGGGDGLRSQMQKNYGSPLISGSTPKHERCSPSHNKSPAYTPQALDSESESGSSSIAEKSYQNSPSSDDGGGSGSRAQTEYSAEKHKKHKKEKKRLKDKDRDREKKKSYGMKPESWSKSPISADPTMAMSGGSMMSSDRGVRPTPSFLMDDDDLMDVPLTL.

Short sequence motifs (LXXLL motif) lie at residues 585 to 589 and 626 to 630; these read LTSLL and LMNLL. 3 disordered regions span residues 592–687, 771–880, and 922–1561; these read TNNT…TEDD, SKLS…FKDF, and SKTL…MDDD. Positions 675-687 are enriched in basic and acidic residues; the sequence is TGAEKMKNQTEDD. Composition is skewed to polar residues over residues 788-801, 832-861, and 931-942; these read RDSSSSGHSQSTLF, GSPNSDSPNTFFNSVDFNPDLLNSQSQSGF, and QETQSRSQSPLL. A compositionally biased stretch (basic and acidic residues) spans 946–958; sequence LGKDRPQKQKVKE. Residues 961–970 show a composition bias toward gly residues; that stretch reads NGGGAGGGLS. 5 stretches are compositionally biased toward low complexity: residues 1022–1035, 1066–1082, 1089–1113, 1121–1140, and 1152–1161; these read PTSTGGSKSPGTSG, SSHGQYSSSGSSSSSSS, SSLSSSASGKIKSNKSDGSSGMKIG, SGQSGQSSSQSKNSSQSMGK, and SSNVSNSSGS. Positions 1173 to 1190 are enriched in polar residues; sequence MNPSLSKPNISPSHSRPS. Over residues 1217-1228 the composition is skewed to gly residues; that stretch reads GSGGQHLSGGGS. Residues 1229–1271 show a composition bias toward low complexity; sequence NSTTKSSSGLVSSGSLSQKPNSSSSSSSSSSSSSSSSSSSSSS. Positions 1276 to 1287 are enriched in polar residues; the sequence is VSQNLHGNSKGK. Gly residues predominate over residues 1308–1328; that stretch reads VGTGGPGSEDPMDGGGGGGST. A compositionally biased stretch (basic and acidic residues) spans 1347–1359; that stretch reads PTKREKSEKDKSK. Polar residues-rich tracts occupy residues 1418-1433 and 1441-1455; these read SQMQKNYGSPLISGST and PSHNKSPAYTPQALD. Residues 1459-1469 show a composition bias toward low complexity; sequence ESGSSSIAEKS. Residues 1494 to 1503 show a composition bias toward basic residues; it reads KHKKHKKEKK. The segment covering 1504–1516 has biased composition (basic and acidic residues); sequence RLKDKDRDREKKK. Low complexity predominate over residues 1536–1546; it reads MAMSGGSMMSS.

The protein belongs to the Mediator complex subunit 1 family. As to quaternary structure, component of the Mediator complex.

The protein localises to the nucleus. Functionally, component of the Mediator complex, a coactivator involved in the regulated transcription of nearly all RNA polymerase II-dependent genes. Mediator functions as a bridge to convey information from gene-specific regulatory proteins to the basal RNA polymerase II transcription machinery. Mediator is recruited to promoters by direct interactions with regulatory proteins and serves as a scaffold for the assembly of a functional preinitiation complex with RNA polymerase II and the general transcription factors. This is Mediator of RNA polymerase II transcription subunit 1 (med1) from Xenopus laevis (African clawed frog).